A 120-amino-acid chain; its full sequence is T-cell receptor beta chain V region PHDS203 (120 aa).

The N-terminal stretch at 1–11 is a signal peptide; sequence VVLCFLGTGLV. The tract at residues 12 to 106 is v segment; sequence DMKVTQMSRY…TSVYFCAQGA (95 aa). Cysteines 34 and 102 form a disulfide. The segment at 107–120 is j segment; sequence PEQYFGPGTRLTVL.

The protein is T-cell receptor beta chain V region PHDS203 of Mus musculus (Mouse).